Consider the following 530-residue polypeptide: Bifunctional purine biosynthesis protein PurH (530 aa).

Positions 1–148 (MEQARPIRRA…KNHKDVAIVV (148 aa)) constitute an MGS-like domain.

The protein belongs to the PurH family.

The catalysed reaction is (6R)-10-formyltetrahydrofolate + 5-amino-1-(5-phospho-beta-D-ribosyl)imidazole-4-carboxamide = 5-formamido-1-(5-phospho-D-ribosyl)imidazole-4-carboxamide + (6S)-5,6,7,8-tetrahydrofolate. It carries out the reaction IMP + H2O = 5-formamido-1-(5-phospho-D-ribosyl)imidazole-4-carboxamide. The protein operates within purine metabolism; IMP biosynthesis via de novo pathway; 5-formamido-1-(5-phospho-D-ribosyl)imidazole-4-carboxamide from 5-amino-1-(5-phospho-D-ribosyl)imidazole-4-carboxamide (10-formyl THF route): step 1/1. Its pathway is purine metabolism; IMP biosynthesis via de novo pathway; IMP from 5-formamido-1-(5-phospho-D-ribosyl)imidazole-4-carboxamide: step 1/1. The polypeptide is Bifunctional purine biosynthesis protein PurH (Aeromonas hydrophila subsp. hydrophila (strain ATCC 7966 / DSM 30187 / BCRC 13018 / CCUG 14551 / JCM 1027 / KCTC 2358 / NCIMB 9240 / NCTC 8049)).